We begin with the raw amino-acid sequence, 421 residues long: Gamma-glutamyl phosphate reductase (421 aa).

The protein belongs to the gamma-glutamyl phosphate reductase family.

Its subcellular location is the cytoplasm. The enzyme catalyses L-glutamate 5-semialdehyde + phosphate + NADP(+) = L-glutamyl 5-phosphate + NADPH + H(+). It participates in amino-acid biosynthesis; L-proline biosynthesis; L-glutamate 5-semialdehyde from L-glutamate: step 2/2. In terms of biological role, catalyzes the NADPH-dependent reduction of L-glutamate 5-phosphate into L-glutamate 5-semialdehyde and phosphate. The product spontaneously undergoes cyclization to form 1-pyrroline-5-carboxylate. This chain is Gamma-glutamyl phosphate reductase, found in Dinoroseobacter shibae (strain DSM 16493 / NCIMB 14021 / DFL 12).